The primary structure comprises 48 residues: MTKQLSPYQDKIHKHILRDRFLSSFKQPGRFRAELEKVKLMQKEKGHE.

This is an uncharacterized protein from Escherichia coli (Bacteriophage HK022).